We begin with the raw amino-acid sequence, 615 residues long: Chromosomal replication initiator protein DnaA (615 aa).

A domain I, interacts with DnaA modulators region spans residues 1 to 88 (MSEGQINLAM…RVAVTVDPSA (88 aa)). Residues 85 to 272 (DPSAVPPSAP…PTSGGPDQLN (188 aa)) are disordered. The domain II stretch occupies residues 88–269 (AVPPSAPTEE…STNPTSGGPD (182 aa)). Composition is skewed to low complexity over residues 94-112 (PTEE…PAPD) and 173-190 (PSSA…VAES). A domain III, AAA+ region region spans residues 270-486 (QLNPKYTFDT…GALIRVTAFA (217 aa)). ATP contacts are provided by glycine 314, glycine 316, lysine 317, and threonine 318. The segment at 487–615 (SLNRQSVDLH…QQAHHNHHHL (129 aa)) is domain IV, binds dsDNA.

Belongs to the DnaA family. Oligomerizes as a right-handed, spiral filament on DNA at oriC.

It is found in the cytoplasm. Functionally, plays an essential role in the initiation and regulation of chromosomal replication. ATP-DnaA binds to the origin of replication (oriC) to initiate formation of the DNA replication initiation complex once per cell cycle. Binds the DnaA box (a 9 base pair repeat at the origin) and separates the double-stranded (ds)DNA. Forms a right-handed helical filament on oriC DNA; dsDNA binds to the exterior of the filament while single-stranded (ss)DNA is stabiized in the filament's interior. The ATP-DnaA-oriC complex binds and stabilizes one strand of the AT-rich DNA unwinding element (DUE), permitting loading of DNA polymerase. After initiation quickly degrades to an ADP-DnaA complex that is not apt for DNA replication. Binds acidic phospholipids. This Thermobifida fusca (strain YX) protein is Chromosomal replication initiator protein DnaA.